The sequence spans 355 residues: MSGQGKRLMVMAGGTGGHVFPGLAVAHHLMAQGWQVRWLGTADRMEADLVPKHGIEIDFIRISGLRGKGIKALIAAPLRIFNAWRQARAIMKAYKPDVVLGMGGYVSGPGGLAAWSLGIPVVLHEQNGIAGLTNKWLAKIATKVMQAFPGAFPNAEVVGNPVRTDVLALPLPQQRLAGREGPVRVLVVGGSQGARILNQTMPQVAAKLGDSVTIWHQSGKGSQQSVEQAYAEAGQPQHKVTEFIDDMAAAYAWADVVVCRSGALTVSEIAAAGLPALFVPFQHKDRQQYWNALPLEKAGAAKIIEQSQLSVDAVANTLAGWSREILLTMAERARAASIPDATERVANEVSRAARA.

UDP-N-acetyl-alpha-D-glucosamine-binding positions include 15 to 17, asparagine 127, arginine 163, serine 191, isoleucine 244, 263 to 268, and glutamine 288; these read TGG and ALTVSE.

Belongs to the glycosyltransferase 28 family. MurG subfamily.

The protein localises to the cell inner membrane. It catalyses the reaction di-trans,octa-cis-undecaprenyl diphospho-N-acetyl-alpha-D-muramoyl-L-alanyl-D-glutamyl-meso-2,6-diaminopimeloyl-D-alanyl-D-alanine + UDP-N-acetyl-alpha-D-glucosamine = di-trans,octa-cis-undecaprenyl diphospho-[N-acetyl-alpha-D-glucosaminyl-(1-&gt;4)]-N-acetyl-alpha-D-muramoyl-L-alanyl-D-glutamyl-meso-2,6-diaminopimeloyl-D-alanyl-D-alanine + UDP + H(+). It participates in cell wall biogenesis; peptidoglycan biosynthesis. Its function is as follows. Cell wall formation. Catalyzes the transfer of a GlcNAc subunit on undecaprenyl-pyrophosphoryl-MurNAc-pentapeptide (lipid intermediate I) to form undecaprenyl-pyrophosphoryl-MurNAc-(pentapeptide)GlcNAc (lipid intermediate II). In Escherichia coli O45:K1 (strain S88 / ExPEC), this protein is UDP-N-acetylglucosamine--N-acetylmuramyl-(pentapeptide) pyrophosphoryl-undecaprenol N-acetylglucosamine transferase.